Here is a 574-residue protein sequence, read N- to C-terminus: MHAVRYSQAFIPTLKEAPADAQVASHKLLVRAGFIRQLGAGIYDYLPLAKRSLAKVEAIVREEMDAIGGQEFYLPALHPAEIWKESGRWDVMGDNMFRLKDRKGGDYCLGMTHEEIFTAVARDELRSYRQLPQVWYQIQTKFRDEPRPKSGLLRVRQFTMKDAYSFDVDRAGLDRSYEDQRRAYEKIFTRCGLDFVAVQAHSGSMGGSESSEFMVRTEAGEDLVAACPRCRYAANTETATSRVAAEADGPGLGAPEKFATPGVVTIEALEQAPHSVPARRQLKTLVYMADEKPVIAVVRGDQELNEAKLQTATGAVAVRPAHPEEIPPLMGARAGSLGAVRFTRARVLVDPSLADRKDMVTGANEDGFHLRGVDVRRDVLAHGATLAELRTVKAGEGCPRCDGTLDVFKALEIGHIFKLGTKYSESMKATVLDAEGKQVPIVMGSYGIGVERILAAAIELHHDDNGIVFPMAIAPFHATVLTLGPEPELRKAAEEVVAALGKEGVEVLFDDRDERAGVKFKDADLLGIPIRIAVGKKGLAAGNVEWKLRKGGAVELVPVGEVARKAAEAVRAAT.

It belongs to the class-II aminoacyl-tRNA synthetase family. ProS type 1 subfamily. As to quaternary structure, homodimer.

It localises to the cytoplasm. The catalysed reaction is tRNA(Pro) + L-proline + ATP = L-prolyl-tRNA(Pro) + AMP + diphosphate. In terms of biological role, catalyzes the attachment of proline to tRNA(Pro) in a two-step reaction: proline is first activated by ATP to form Pro-AMP and then transferred to the acceptor end of tRNA(Pro). As ProRS can inadvertently accommodate and process non-cognate amino acids such as alanine and cysteine, to avoid such errors it has two additional distinct editing activities against alanine. One activity is designated as 'pretransfer' editing and involves the tRNA(Pro)-independent hydrolysis of activated Ala-AMP. The other activity is designated 'posttransfer' editing and involves deacylation of mischarged Ala-tRNA(Pro). The misacylated Cys-tRNA(Pro) is not edited by ProRS. This chain is Proline--tRNA ligase, found in Anaeromyxobacter sp. (strain K).